Reading from the N-terminus, the 172-residue chain is Translationally-controlled tumor protein homolog (172 aa).

In terms of domain architecture, TCTP spans 1–172 (MIIYKDTVTE…FKDGLISEKC (172 aa)).

This sequence belongs to the TCTP family.

It localises to the cytoplasm. In terms of biological role, involved in calcium binding and microtubule stabilization. This is Translationally-controlled tumor protein homolog (tpt1) from Xenopus tropicalis (Western clawed frog).